An 852-amino-acid polypeptide reads, in one-letter code: DNA mismatch repair protein MutS (852 aa).

Glycine 615–serine 622 serves as a coordination point for ATP.

Belongs to the DNA mismatch repair MutS family.

This protein is involved in the repair of mismatches in DNA. It is possible that it carries out the mismatch recognition step. This protein has a weak ATPase activity. The sequence is that of DNA mismatch repair protein MutS from Thermodesulfovibrio yellowstonii (strain ATCC 51303 / DSM 11347 / YP87).